Consider the following 630-residue polypeptide: Probable potassium transport system protein Kup (630 aa).

A run of 12 helical transmembrane segments spans residues 17–37 (LAIAAIGVVFGDIGTSPLYSL), 51–71 (PSAILGVISLLFWAIILVVGI), 105–125 (ITGLMMALGIFGACMFYGDAV), 144–164 (PQLSHLVLPITIVILIALFWI), 175–195 (LFGPIMLLWFVTIAALGIYHI), 218–238 (VLLAYVVLGSVVLVLTGAEAL), 255–275 (YVLVMPSLVLNYFGQGALLLL), 283–303 (PFFLLAPQWAALPLVVLSTVA), 344–364 (IYVPVVNWLLLFVILCIVIGF), 374–394 (YGIAVTATMVITTILAAVVMV), 402–422 (LLVAMIIGVFLVIDLGFFGAN), and 428–448 (QGGWLPLGIGALLFFLLMTWY).

It belongs to the HAK/KUP transporter (TC 2.A.72) family.

It localises to the cell inner membrane. The enzyme catalyses K(+)(in) + H(+)(in) = K(+)(out) + H(+)(out). In terms of biological role, transport of potassium into the cell. Likely operates as a K(+):H(+) symporter. This is Probable potassium transport system protein Kup from Burkholderia mallei (strain NCTC 10247).